Consider the following 493-residue polypeptide: Probable GTP-binding protein OBGM, mitochondrial (493 aa).

Residues Met-1 to Pro-28 constitute a mitochondrion transit peptide. The Obg domain occupies Thr-48 to Ile-303. Disordered stretches follow at residues Ser-65–Gly-89 and Gly-146–Asp-215. Acidic residues predominate over residues Ser-187–Gln-196. The region spanning Ala-304–Asp-476 is the OBG-type G domain. GTP-binding positions include Gly-310 to Ser-317 and Asp-356 to Leu-360.

This sequence belongs to the TRAFAC class OBG-HflX-like GTPase superfamily. OBG GTPase family.

The protein resides in the mitochondrion. Functionally, may bind GTP and have GTPase activity. This is Probable GTP-binding protein OBGM, mitochondrial (ATOBGM) from Arabidopsis thaliana (Mouse-ear cress).